Consider the following 301-residue polypeptide: D-alanine--D-alanine ligase (301 aa).

The ATP-grasp domain occupies 99–294; it reads KCILKAANIR…FSELIDMIID (196 aa). 126 to 181 contributes to the ATP binding site; it reads IEGMGYPVVVKPTHGGSSVATFIIKEEKDIKNAVTEAFKWDSEVIIEKFIKGDEIT. Mg(2+)-binding residues include aspartate 248, glutamate 261, and asparagine 263.

The protein belongs to the D-alanine--D-alanine ligase family. Requires Mg(2+) as cofactor. Mn(2+) serves as cofactor.

It localises to the cytoplasm. It carries out the reaction 2 D-alanine + ATP = D-alanyl-D-alanine + ADP + phosphate + H(+). Its pathway is cell wall biogenesis; peptidoglycan biosynthesis. In terms of biological role, cell wall formation. The chain is D-alanine--D-alanine ligase from Clostridium botulinum (strain Eklund 17B / Type B).